We begin with the raw amino-acid sequence, 568 residues long: 2-succinyl-5-enolpyruvyl-6-hydroxy-3-cyclohexene-1-carboxylate synthase (568 aa).

Belongs to the TPP enzyme family. MenD subfamily. As to quaternary structure, homodimer. The cofactor is Mg(2+). Requires Mn(2+) as cofactor. Thiamine diphosphate is required as a cofactor.

The catalysed reaction is isochorismate + 2-oxoglutarate + H(+) = 5-enolpyruvoyl-6-hydroxy-2-succinyl-cyclohex-3-ene-1-carboxylate + CO2. It participates in quinol/quinone metabolism; 1,4-dihydroxy-2-naphthoate biosynthesis; 1,4-dihydroxy-2-naphthoate from chorismate: step 2/7. It functions in the pathway quinol/quinone metabolism; menaquinone biosynthesis. In terms of biological role, catalyzes the thiamine diphosphate-dependent decarboxylation of 2-oxoglutarate and the subsequent addition of the resulting succinic semialdehyde-thiamine pyrophosphate anion to isochorismate to yield 2-succinyl-5-enolpyruvyl-6-hydroxy-3-cyclohexene-1-carboxylate (SEPHCHC). This Actinobacillus pleuropneumoniae serotype 7 (strain AP76) protein is 2-succinyl-5-enolpyruvyl-6-hydroxy-3-cyclohexene-1-carboxylate synthase.